A 275-amino-acid polypeptide reads, in one-letter code: NAD kinase (275 aa).

D68 serves as the catalytic Proton acceptor. Residues 68–69 (DG), R73, 136–137 (NE), K147, R164, D166, 177–182 (TAYAMS), A201, and Q236 each bind NAD(+).

Belongs to the NAD kinase family. A divalent metal cation is required as a cofactor.

It is found in the cytoplasm. It catalyses the reaction NAD(+) + ATP = ADP + NADP(+) + H(+). Functionally, involved in the regulation of the intracellular balance of NAD and NADP, and is a key enzyme in the biosynthesis of NADP. Catalyzes specifically the phosphorylation on 2'-hydroxyl of the adenosine moiety of NAD to yield NADP. This chain is NAD kinase, found in Methanosarcina acetivorans (strain ATCC 35395 / DSM 2834 / JCM 12185 / C2A).